The sequence spans 107 residues: Large ribosomal subunit protein bL21 (107 aa).

Belongs to the bacterial ribosomal protein bL21 family. As to quaternary structure, part of the 50S ribosomal subunit. Contacts protein L20.

In terms of biological role, this protein binds to 23S rRNA in the presence of protein L20. This is Large ribosomal subunit protein bL21 from Chlamydia muridarum (strain MoPn / Nigg).